The chain runs to 216 residues: Cytochrome c-type protein Cgr1 (216 aa).

Residues 18–38 form a helical membrane-spanning segment; that stretch reads WPIVVGVVVVVLIAAGAGFWV. Residues Cys-46, Cys-50, His-51, Cys-95, Cys-98, His-99, Cys-142, Cys-147, His-148, Cys-176, Cys-179, His-180, Cys-190, Cys-193, and His-194 each contribute to the heme site.

Belongs to the multiheme cytochrome c family. May form a membrane-associated complex with Cgr2. Binds 5 heme groups per subunit.

The protein resides in the cell membrane. In terms of biological role, probably transfers electrons from a membrane-associated electron donor (e.g. the membrane quinone pool) to the [4Fe-4S] cluster of the Cgr2 reductase via its covalently bound heme groups. The chain is Cytochrome c-type protein Cgr1 from Eggerthella lenta (strain ATCC 25559 / DSM 2243 / CCUG 17323 / JCM 9979 / KCTC 3265 / NCTC 11813 / VPI 0255 / 1899 B) (Eubacterium lentum).